The chain runs to 154 residues: Lipoprotein signal peptidase (154 aa).

2 helical membrane-spanning segments follow: residues 55–75 and 85–105; these read GQFW…VIYI and AGVG…DRVF. Catalysis depends on residues Asp-111 and Asp-129. Residues 127–147 traverse the membrane as a helical segment; sequence VADSALTVGVILLFVHMFFFA.

Belongs to the peptidase A8 family.

Its subcellular location is the cell membrane. It carries out the reaction Release of signal peptides from bacterial membrane prolipoproteins. Hydrolyzes -Xaa-Yaa-Zaa-|-(S,diacylglyceryl)Cys-, in which Xaa is hydrophobic (preferably Leu), and Yaa (Ala or Ser) and Zaa (Gly or Ala) have small, neutral side chains.. It participates in protein modification; lipoprotein biosynthesis (signal peptide cleavage). This protein specifically catalyzes the removal of signal peptides from prolipoproteins. This is Lipoprotein signal peptidase from Geobacillus kaustophilus (strain HTA426).